The primary structure comprises 301 residues: MADQPKPISPLKNLLAGGFGGVCLVFVGHPLDTVKVRLQTQPPSLPGQPPMYSGTFDCFRKTLFREGIRGLYRGMAAPIIGVTPMFAVCFFGFGLGKKLQQKHPEDVLSYPQLFAAGMLSGIFTTGIMTPGERIKCLLQIQASSGETKYTGTLDCAKKLYQEFGIRGIYKGTVVTLMRDVPASGMYFMTYEWVKNIFTPEGKRVSELSVPRVLVAGGIAGIFNWAVAIPPDVLKSRFQTAPPGKYPNGFRDVLRELIPDEGVTSLYKGFNAVMIRAFPANAACFLGFEVAMKFLNWATPNL.

The residue at position 2 (Ala2) is an N-acetylalanine. The Cytoplasmic portion of the chain corresponds to 2-12; the sequence is ADQPKPISPLK. Solcar repeat units follow at residues 8 to 99, 108 to 196, and 207 to 293; these read ISPL…GKKL, LSYP…VKNI, and LSVP…AMKF. The chain crosses the membrane as a helical span at residues 13–31; that stretch reads NLLAGGFGGVCLVFVGHPL. The Mitochondrial matrix segment spans residues 32-73; the sequence is DTVKVRLQTQPPSLPGQPPMYSGTFDCFRKTLFREGIRGLYR. The chain crosses the membrane as a helical span at residues 74–93; that stretch reads GMAAPIIGVTPMFAVCFFGF. The Cytoplasmic portion of the chain corresponds to 94-112; sequence GLGKKLQQKHPEDVLSYPQ. A helical transmembrane segment spans residues 113 to 131; the sequence is LFAAGMLSGIFTTGIMTPG. The Mitochondrial matrix portion of the chain corresponds to 132–170; sequence ERIKCLLQIQASSGETKYTGTLDCAKKLYQEFGIRGIYK. Lys148 and Lys157 each carry N6-acetyllysine. Lys170 is modified (N6-acetyllysine; alternate). Lys170 is subject to N6-succinyllysine; alternate. Residues 171–190 form a helical membrane-spanning segment; it reads GTVVTLMRDVPASGMYFMTY. Residues 191–211 are Cytoplasmic-facing; sequence EWVKNIFTPEGKRVSELSVPR. A helical transmembrane segment spans residues 212 to 230; sequence VLVAGGIAGIFNWAVAIPP. Over 231-267 the chain is Mitochondrial matrix; that stretch reads DVLKSRFQTAPPGKYPNGFRDVLRELIPDEGVTSLYK. The chain crosses the membrane as a helical span at residues 268–287; the sequence is GFNAVMIRAFPANAACFLGF. Topologically, residues 288 to 301 are cytoplasmic; that stretch reads EVAMKFLNWATPNL.

It belongs to the mitochondrial carrier (TC 2.A.29) family.

It localises to the mitochondrion inner membrane. It carries out the reaction O-acetyl-(R)-carnitine(in) + (R)-carnitine(out) = O-acetyl-(R)-carnitine(out) + (R)-carnitine(in). It catalyses the reaction an O-acyl-(R)-carnitine(in) + (R)-carnitine(out) = an O-acyl-(R)-carnitine(out) + (R)-carnitine(in). The enzyme catalyses O-propanoyl-(R)-carnitine(in) + (R)-carnitine(out) = O-propanoyl-(R)-carnitine(out) + (R)-carnitine(in). The catalysed reaction is O-hexadecanoyl-(R)-carnitine(in) + (R)-carnitine(out) = O-hexadecanoyl-(R)-carnitine(out) + (R)-carnitine(in). It carries out the reaction O-octanoyl-(R)-carnitine(in) + (R)-carnitine(out) = O-octanoyl-(R)-carnitine(out) + (R)-carnitine(in). It catalyses the reaction (R)-carnitine(in) = (R)-carnitine(out). In terms of biological role, mediates the electroneutral exchange of acylcarnitines (O-acyl-(R)-carnitine or L-acylcarnitine) of different acyl chain lengths (ranging from O-acetyl-(R)-carnitine to long-chain O-acyl-(R)-carnitines) with free carnitine ((R)-carnitine or L-carnitine) across the mitochondrial inner membrane, via a ping-pong mechanism. Key player in the mitochondrial oxidation pathway, it translocates the fatty acids in the form of acylcarnitines into the mitochondrial matrix, where the carnitine palmitoyltransferase 2 (CPT-2) activates them to undergo fatty acid beta-oxidation. Catalyzes the unidirectional transport (uniport) of carnitine at lower rates than the antiport (exchange). In Macaca fascicularis (Crab-eating macaque), this protein is Mitochondrial carnitine/acylcarnitine carrier protein (SLC25A20).